The chain runs to 240 residues: Probable septum site-determining protein MinC (240 aa).

This sequence belongs to the MinC family. As to quaternary structure, interacts with MinD and FtsZ.

In terms of biological role, cell division inhibitor that blocks the formation of polar Z ring septums. Rapidly oscillates between the poles of the cell to destabilize FtsZ filaments that have formed before they mature into polar Z rings. Prevents FtsZ polymerization. This is Probable septum site-determining protein MinC from Acinetobacter baumannii (strain AYE).